A 426-amino-acid polypeptide reads, in one-letter code: 3-phosphoshikimate 1-carboxyvinyltransferase (426 aa).

Residues Lys-22, Ser-23, and Arg-27 each contribute to the 3-phosphoshikimate site. Lys-22 contributes to the phosphoenolpyruvate binding site. Phosphoenolpyruvate-binding residues include Gly-96 and Arg-124. Positions 170, 171, 172, 198, 314, 337, and 341 each coordinate 3-phosphoshikimate. Gln-172 contacts phosphoenolpyruvate. Asp-314 acts as the Proton acceptor in catalysis. 3 residues coordinate phosphoenolpyruvate: Arg-345, Arg-387, and Lys-412.

Belongs to the EPSP synthase family. Monomer.

The protein localises to the cytoplasm. The enzyme catalyses 3-phosphoshikimate + phosphoenolpyruvate = 5-O-(1-carboxyvinyl)-3-phosphoshikimate + phosphate. The protein operates within metabolic intermediate biosynthesis; chorismate biosynthesis; chorismate from D-erythrose 4-phosphate and phosphoenolpyruvate: step 6/7. Functionally, catalyzes the transfer of the enolpyruvyl moiety of phosphoenolpyruvate (PEP) to the 5-hydroxyl of shikimate-3-phosphate (S3P) to produce enolpyruvyl shikimate-3-phosphate and inorganic phosphate. This is 3-phosphoshikimate 1-carboxyvinyltransferase from Aliivibrio fischeri (strain MJ11) (Vibrio fischeri).